Here is a 520-residue protein sequence, read N- to C-terminus: UDP-N-acetylmuramoyl-L-alanyl-D-glutamate--2,6-diaminopimelate ligase (520 aa).

A UDP-N-acetyl-alpha-D-muramoyl-L-alanyl-D-glutamate-binding site is contributed by leucine 48. 134 to 140 (GTSGKTT) is an ATP binding site. Residues 176–177 (TT), serine 203, and arginine 211 each bind UDP-N-acetyl-alpha-D-muramoyl-L-alanyl-D-glutamate. An N6-carboxylysine modification is found at lysine 243. Residues arginine 405, 429–432 (DNPR), glycine 483, and glutamate 487 contribute to the meso-2,6-diaminopimelate site. A Meso-diaminopimelate recognition motif motif is present at residues 429–432 (DNPR).

This sequence belongs to the MurCDEF family. MurE subfamily. The cofactor is Mg(2+). Carboxylation is probably crucial for Mg(2+) binding and, consequently, for the gamma-phosphate positioning of ATP.

It is found in the cytoplasm. It catalyses the reaction UDP-N-acetyl-alpha-D-muramoyl-L-alanyl-D-glutamate + meso-2,6-diaminopimelate + ATP = UDP-N-acetyl-alpha-D-muramoyl-L-alanyl-gamma-D-glutamyl-meso-2,6-diaminopimelate + ADP + phosphate + H(+). It participates in cell wall biogenesis; peptidoglycan biosynthesis. In terms of biological role, catalyzes the addition of meso-diaminopimelic acid to the nucleotide precursor UDP-N-acetylmuramoyl-L-alanyl-D-glutamate (UMAG) in the biosynthesis of bacterial cell-wall peptidoglycan. The chain is UDP-N-acetylmuramoyl-L-alanyl-D-glutamate--2,6-diaminopimelate ligase from Mycolicibacterium paratuberculosis (strain ATCC BAA-968 / K-10) (Mycobacterium paratuberculosis).